The primary structure comprises 296 residues: MKNINGIGIALVTPFNKKGEIDFISLEKIVSYVINEGVQYLVLLGTTGETPTLKLKEKIDIINCVKNISQNRIPIVLGMGSNNTEDVLLTLKLIKLDNFEAILSVCPYYNKPSQEGIYNHFKTISENTDMKIIIYNVPHRTGTNINLDTINRLINNRDNIIGIKEASGNIIQSYNFIKHKIKKDFLVFSGDDTIGLPIVLGGGDGIISVIGQAFPKELDFIYKFAYKNQVNKAYKLYYKIFKILNLVFKEGNPSGIKTLLKIKGLCNKYVRLPLLKGSKTLEKKLYIEYNNMLKTQ.

Residue Thr47 coordinates pyruvate. Tyr135 serves as the catalytic Proton donor/acceptor. Residue Lys164 is the Schiff-base intermediate with substrate of the active site. Ile207 provides a ligand contact to pyruvate.

Belongs to the DapA family. Homotetramer; dimer of dimers.

The protein resides in the cytoplasm. The enzyme catalyses L-aspartate 4-semialdehyde + pyruvate = (2S,4S)-4-hydroxy-2,3,4,5-tetrahydrodipicolinate + H2O + H(+). It participates in amino-acid biosynthesis; L-lysine biosynthesis via DAP pathway; (S)-tetrahydrodipicolinate from L-aspartate: step 3/4. Its function is as follows. Catalyzes the condensation of (S)-aspartate-beta-semialdehyde [(S)-ASA] and pyruvate to 4-hydroxy-tetrahydrodipicolinate (HTPA). The polypeptide is 4-hydroxy-tetrahydrodipicolinate synthase (Karelsulcia muelleri (strain GWSS) (Sulcia muelleri)).